Consider the following 263-residue polypeptide: MLAIVDVGNTNIKFTLYVDGEFSESWYISTYHERTASELYAILRVLASQANINIHHLVGAAVSSVFPAVNGSITEMFKSFFNIVPVFITSAHASLLGINICLAQNTIGSDRLADIVAARTLYPDRDLLVIDMGTITVFNLVNKNGDLYGQVLSPGLACLVKSVRLCTAALPQVCVNKPTTKVISDATASSLESGLYWGYLSMVEGVIQRILKEESGKSLQTVATGGASNFFRDTTHVLSIDKLLTTKGILQIYRKLIENEEGR.

An ATP-binding site is contributed by 6-13 (DVGNTNIK). Residue 108 to 111 (GSDR) participates in substrate binding. Residue Asp-110 is the Proton acceptor of the active site. Asp-131 provides a ligand contact to K(+). Thr-134 provides a ligand contact to ATP. Residue Thr-187 coordinates substrate.

This sequence belongs to the type III pantothenate kinase family. In terms of assembly, homodimer. NH4(+) is required as a cofactor. Requires K(+) as cofactor.

The protein localises to the cytoplasm. It carries out the reaction (R)-pantothenate + ATP = (R)-4'-phosphopantothenate + ADP + H(+). It participates in cofactor biosynthesis; coenzyme A biosynthesis; CoA from (R)-pantothenate: step 1/5. Functionally, catalyzes the phosphorylation of pantothenate (Pan), the first step in CoA biosynthesis. In Anaplasma phagocytophilum (strain HZ), this protein is Type III pantothenate kinase.